Here is a 216-residue protein sequence, read N- to C-terminus: Small ribosomal subunit protein uS3 (216 aa).

A KH type-2 domain is found at 20–91 (LKEFFEKALV…SVEIVVEKVH (72 aa)).

This sequence belongs to the universal ribosomal protein uS3 family.

This is Small ribosomal subunit protein uS3 (RPS3) from Encephalitozoon cuniculi (strain GB-M1) (Microsporidian parasite).